A 141-amino-acid polypeptide reads, in one-letter code: Hemoglobin subunit alpha-D (141 aa).

The region spanning 1-141 (MLTAEDKKLI…VAAVLAEKYR (141 aa)) is the Globin domain. Residues His58 and His87 each coordinate heme b.

The protein belongs to the globin family. As to quaternary structure, heterotetramer of two alpha-D chains and two beta chains. As to expression, red blood cells.

Its function is as follows. Involved in oxygen transport from the lung to the various peripheral tissues. The chain is Hemoglobin subunit alpha-D (HBAD) from Accipiter gentilis (Northern goshawk).